The following is a 194-amino-acid chain: uncharacterized protein (194 aa).

The protein to A.rhizogenes plasmid pRia4B ORF-3 in virA region.

This is an uncharacterized protein from Sinorhizobium fredii (strain NBRC 101917 / NGR234).